A 982-amino-acid chain; its full sequence is MPPPAEVTDPSHAPAVLHQLNEQRLRGLFCDVTLIAGDTKFPAHRSVLAASSPFFREALLASAPLPLPPVTGGSAPSPATTTAASSSSSSPPPASPHSSSPPRVLELPGVPAAAFSDVLNFIYSARLALPGGGGDGAAVAEIGALGRRLGISRLQGLGEGGDTWVPPAPTSMVTSDPTEDGLGAGPRTDGEWVGDKAEALTPDSQPRRPFPCPRCGKSFIHPKRLQTHEAQCRRGSNTRGSAGLGPGVSGSGGPAGVDASALPQPVGFRDGPEHVVKVVGGHVLYVCAACERSYVTLSSLKRHSNVHSWRRKYPCRYCEKVFALAEYRTKHEVWHTGERRYQCIFCWDTFVTYYNLKTHQRAFHGISPGLLASEKTPNGGYKPRLNTLKLYRLLPMRAAKRPYKTYSQGAPEAPLSPSLHTPAPAAMPASPQPLPPPAPEPGPPPSVITFAHPAPSVIVHGSSSSGAAGGGPAGTGGSQAASVITYTTPPRPPKKREYPPPPPEPTATPTSPASTAVSPATAAGPATATEEAKGRNLRAGRTLTYTAKPVGGLSGSGGSPTGTGRGSSQLQAPPPLCQITVRIGEEAIVKRRISETDLRPGELSGEEVEESEEEEEEEEEEDQEEQEESKAGGEDQLWRPYYSYKPKRKAGATAGGASGVSGLPRGRRPPRWRQKLERRGWEETPSVEGPGGRGRGERRHRCGDCAQAFATVRKLRKHQEAHSGGSHTSRTGRRSSTRFTCPHCAKVCKTAAALNRHGQRHAVERPGGTPTPVIAYSKGSIGTRPTDVKEEAPQEMQVSSSSGEAGSGSAAAAEASESASLQDPVISGGEEPPVAGGGSYVYPPVQEFPLALIGGSREPSAGKGKPGNEGSLGASEGDRMEGMGTAKVTFYPEPYPLVYGPQLLAAYPYNFSNLAALPVALNMVLPDEKGGGALPFLPGVFGYAVNPQAAPPTPPPPLPLPVSPKGIGGMTGVERTQKGDVG.

Residues 30–131 (CDVTLIAGDT…IYSARLALPG (102 aa)) enclose the BTB domain. Lys-40 participates in a covalent cross-link: Glycyl lysine isopeptide (Lys-Gly) (interchain with G-Cter in SUMO2). The disordered stretch occupies residues 71–103 (TGGSAPSPATTTAASSSSSSPPPASPHSSSPPR). The segment covering 74–89 (SAPSPATTTAASSSSS) has biased composition (low complexity). The tract at residues 165–324 (VPPAPTSMVT…CRYCEKVFAL (160 aa)) is interaction with CBFA2T3. Residues 210-232 (FPCPRCGKSFIHPKRLQTHEAQC) form a C2H2-type 1; atypical zinc finger. Positions 234–255 (RGSNTRGSAGLGPGVSGSGGPA) are disordered. Over residues 242–255 (AGLGPGVSGSGGPA) the composition is skewed to gly residues. 3 C2H2-type zinc fingers span residues 285–307 (YVCA…SNVH), 313–335 (YPCR…EVWH), and 341–364 (YQCI…RAFH). Ser-367 carries the phosphoserine modification. Residues 404 to 578 (KTYSQGAPEA…QLQAPPPLCQ (175 aa)) are disordered. Residues 430 to 446 (SPQPLPPPAPEPGPPPS) show a composition bias toward pro residues. A compositionally biased stretch (gly residues) spans 467–477 (AAGGGPAGTGG). Low complexity-rich tracts occupy residues 478–488 (SQAASVITYTT) and 507–529 (ATPT…ATAT). A Glycyl lysine isopeptide (Lys-Gly) (interchain with G-Cter in SUMO2) cross-link involves residue Lys-548. The span at 552–565 (GLSGSGGSPTGTGR) shows a compositional bias: gly residues. Lys-590 is covalently cross-linked (Glycyl lysine isopeptide (Lys-Gly) (interchain with G-Cter in SUMO2)). Positions 591-600 (RRISETDLRP) are enriched in basic and acidic residues. Disordered regions lie at residues 591 to 700 (RRIS…ERRH), 715 to 738 (LRKH…SSTR), 759 to 839 (QRHA…GGGS), and 854 to 880 (GGSR…GDRM). The span at 604 to 627 (SGEEVEESEEEEEEEEEEDQEEQE) shows a compositional bias: acidic residues. Basic and acidic residues predominate over residues 628 to 637 (ESKAGGEDQL). 2 consecutive C2H2-type zinc fingers follow at residues 700-722 (HRCG…QEAH) and 739-761 (FTCP…GQRH). Thr-769 and Thr-771 each carry phosphothreonine; by HIPK2. The span at 799 to 820 (SSSSGEAGSGSAAAAEASESAS) shows a compositional bias: low complexity. Thr-953 carries the phosphothreonine; by HIPK2 modification.

Interacts with HIPK2. Interacts with CBFA2T3. Interacts with ZBTB38. In terms of processing, phosphorylated by HIPK2. This phosphorylation reduces stability and triggers ZBTB4 protein degradation in response to DNA damage. As to expression, expressed in adult and aged myogenic satellite cells.

It is found in the nucleus. Its subcellular location is the chromosome. In terms of biological role, transcriptional repressor with bimodal DNA-binding specificity. Represses transcription in a methyl-CpG-dependent manner. Binds with a higher affinity to methylated CpG dinucleotides in the consensus sequence 5'-CGCG-3' but can also bind to the non-methylated consensus sequence 5'-CTGCNA-3' also known as the consensus kaiso binding site (KBS). Can also bind specifically to a single methyl-CpG pair and can bind hemimethylated DNA but with a lower affinity compared to methylated DNA. Plays a role in postnatal myogenesis, may be involved in the regulation of satellite cells self-renewal. This chain is Zinc finger and BTB domain-containing protein 4 (Zbtb4), found in Mus musculus (Mouse).